Here is a 434-residue protein sequence, read N- to C-terminus: 3-phosphoshikimate 1-carboxyvinyltransferase (434 aa).

3-phosphoshikimate is bound by residues lysine 22, serine 23, and arginine 27. Lysine 22 provides a ligand contact to phosphoenolpyruvate. Residues glycine 93 and arginine 121 each contribute to the phosphoenolpyruvate site. 3-phosphoshikimate contacts are provided by serine 168, serine 169, glutamine 170, serine 199, aspartate 320, and lysine 347. Residue glutamine 170 participates in phosphoenolpyruvate binding. Aspartate 320 (proton acceptor) is an active-site residue. 3 residues coordinate phosphoenolpyruvate: arginine 351, arginine 394, and lysine 419.

Belongs to the EPSP synthase family. As to quaternary structure, monomer.

The protein localises to the cytoplasm. The catalysed reaction is 3-phosphoshikimate + phosphoenolpyruvate = 5-O-(1-carboxyvinyl)-3-phosphoshikimate + phosphate. Its pathway is metabolic intermediate biosynthesis; chorismate biosynthesis; chorismate from D-erythrose 4-phosphate and phosphoenolpyruvate: step 6/7. Functionally, catalyzes the transfer of the enolpyruvyl moiety of phosphoenolpyruvate (PEP) to the 5-hydroxyl of shikimate-3-phosphate (S3P) to produce enolpyruvyl shikimate-3-phosphate and inorganic phosphate. This Burkholderia orbicola (strain MC0-3) protein is 3-phosphoshikimate 1-carboxyvinyltransferase.